The following is a 353-amino-acid chain: Melanin-concentrating hormone receptor 1 (353 aa).

The interval 1 to 26 (MDLQTSLLSTGPNASNISDGQDNLTL) is disordered. The Extracellular portion of the chain corresponds to 1-45 (MDLQTSLLSTGPNASNISDGQDNLTLPGSPPRTGSVSYINIIMPS). Asn-13, Asn-16, and Asn-23 each carry an N-linked (GlcNAc...) asparagine glycan. Residues 46-66 (VFGTICLLGIVGNSTVIFAVV) form a helical membrane-spanning segment. Residues 67-79 (KKSKLHWCSNVPD) lie on the Cytoplasmic side of the membrane. A helical membrane pass occupies residues 80–100 (IFIINLSVVDLLFLLGMPFMI). Over 101-116 (HQLMGNGVWHFGETMC) the chain is Extracellular. Residues Cys-116 and Cys-194 are joined by a disulfide bond. The helical transmembrane segment at 117 to 139 (TLITAMDANSQFTSTYILTAMTI) threads the bilayer. The Cytoplasmic portion of the chain corresponds to 140–161 (DRYLATVHPISSTKFRKPSMAT). A helical membrane pass occupies residues 162–182 (LVICLLWALSFISITPVWLYA). Topologically, residues 183–204 (RLIPFPGGAVGCGIRLPNPDTD) are extracellular. A helical transmembrane segment spans residues 205-225 (LYWFTLYQFFLAFALPFVVIT). At 226–256 (AAYVKILQRMTSSVAPASQRSIRLRTKRVTR) the chain is on the cytoplasmic side. A helical transmembrane segment spans residues 257–277 (TAIAICLVFFVCWAPYYVLQL). Over 278–294 (TQLSISRPTLTFVYLYN) the chain is Extracellular. The chain crosses the membrane as a helical span at residues 295 to 315 (AAISLGYANSCLNPFVYIVLC). Residues 316–353 (ETFRKRLVLSVKPAAQGQLRTVSNAQTADEERTESKGT) lie on the Cytoplasmic side of the membrane.

Belongs to the G-protein coupled receptor 1 family. Interacts with NCDN. As to expression, high level in the brain, moderate amounts in the eye and skeletal muscle, and small amounts in tongue and pituitary.

It localises to the cell membrane. Its function is as follows. Receptor for melanin-concentrating hormone, coupled to G proteins that inhibit adenylyl cyclase. The chain is Melanin-concentrating hormone receptor 1 from Rattus norvegicus (Rat).